Here is a 283-residue protein sequence, read N- to C-terminus: N-terminal Xaa-Pro-Lys N-methyltransferase 2 (283 aa).

Residues Gly-124, Arg-129, Asp-146, 174–175, and Gln-190 contribute to the S-adenosyl-L-methionine site; that span reads LQ.

It belongs to the methyltransferase superfamily. NTM1 family.

Its subcellular location is the nucleus. The catalysed reaction is N-terminal L-alanyl-L-prolyl-L-lysyl-[protein] + S-adenosyl-L-methionine = N-terminal N-methyl-L-alanyl-L-prolyl-L-lysyl-[protein] + S-adenosyl-L-homocysteine + H(+). It carries out the reaction N-terminal L-prolyl-L-prolyl-L-lysyl-[protein] + S-adenosyl-L-methionine = N-terminal N-methyl-L-prolyl-L-prolyl-L-lysyl-[protein] + S-adenosyl-L-homocysteine + H(+). It catalyses the reaction N-terminal L-seryl-L-prolyl-L-lysyl-[protein] + S-adenosyl-L-methionine = N-terminal N-methyl-L-seryl-L-prolyl-L-lysyl-[protein] + S-adenosyl-L-homocysteine + H(+). Alpha N-methyltransferase that methylates the N-terminus of target proteins containing the N-terminal motif [Ala/Pro/Ser]-Pro-Lys when the initiator Met is cleaved. Specifically catalyzes monomethylation of exposed alpha-amino group of Ala or Ser residue in the [Ala/Ser]-Pro-Lys motif and Pro in the Pro-Pro-Lys motif. Predominantly functions as a mono-methyltransferase but is also able to di-/tri-methylate the GPKRIA peptide and di-methylate the PPKRIA peptide (in vitro). May activate NTMT1 by priming its substrates for trimethylation. The protein is N-terminal Xaa-Pro-Lys N-methyltransferase 2 (Ntmt2) of Mus musculus (Mouse).